Consider the following 115-residue polypeptide: NADH-ubiquinone oxidoreductase chain 3 (115 aa).

Methionine 1 bears the N-formylmethionine mark. The next 3 helical transmembrane spans lie at 3 to 23 (LMLA…IAFW), 55 to 75 (FFLV…LLPL), and 84 to 104 (LNTM…SLAY).

As to quaternary structure, core subunit of respiratory chain NADH dehydrogenase (Complex I) which is composed of 45 different subunits. Interacts with TMEM186. Interacts with TMEM242.

The protein localises to the mitochondrion inner membrane. It catalyses the reaction a ubiquinone + NADH + 5 H(+)(in) = a ubiquinol + NAD(+) + 4 H(+)(out). Functionally, core subunit of the mitochondrial membrane respiratory chain NADH dehydrogenase (Complex I) which catalyzes electron transfer from NADH through the respiratory chain, using ubiquinone as an electron acceptor. Essential for the catalytic activity of complex I. This chain is NADH-ubiquinone oxidoreductase chain 3, found in Bos taurus (Bovine).